A 1332-amino-acid polypeptide reads, in one-letter code: SAGA complex subunit SPT7 (1332 aa).

Phosphothreonine; by ATM or ATR is present on Thr78. Disordered regions lie at residues 80–118 (EEEH…ISNE), 209–268 (VEEK…ISSS), and 331–384 (IEKG…PKQS). At Ser88 the chain carries Phosphoserine. Low complexity predominate over residues 106 to 118 (NNNTNTNTSISNE). Over residues 217 to 233 (IGKNEKPQNKEGISKFA) the composition is skewed to basic and acidic residues. Positions 234–249 (EDEDYDDEDENYDEDS) are enriched in acidic residues. The segment covering 250–260 (TDVKNVDDPPK) has biased composition (basic and acidic residues). The span at 345-360 (AATDEQDRENTNDEPD) shows a compositional bias: acidic residues. Residues 362-376 (NQKLPTPEGSTFSDT) show a composition bias toward polar residues. Residues 440–546 (IGQEELYEAC…KKSLQLIRMI (107 aa)) enclose the Bromo domain. A compositionally biased stretch (acidic residues) spans 566–578 (KDKDYELDEEEEV). Disordered stretches follow at residues 566–724 (KDKD…YLLE) and 1286–1332 (GAEN…RLNQ). 2 stretches are compositionally biased toward basic and acidic residues: residues 593-634 (LAKE…KDKT) and 644-697 (NVNK…KEAG). Acidic residues predominate over residues 698 to 716 (ENNEEEEDDDDEDEDEDMV). Ser1293 bears the Phosphoserine mark. Residues 1316–1332 (NMGSNSSFSLSLPRLNQ) are compositionally biased toward polar residues.

As to quaternary structure, component of the 1.8 MDa SAGA (Spt-Ada-Gcn5 acetyltransferase) complex, which is composed of 19 subunits TRA1, SPT7, TAF5, NGG1/ADA3, SGF73, SPT20/ADA5, SPT8, TAF12, TAF6, HFI1/ADA1, UBP8, GCN5, ADA2, SPT3, SGF29, TAF10, TAF9, SGF11 and SUS1. The SAGA complex is composed of 4 modules, namely the HAT (histone acetyltransferase) module (GCN5, ADA2, NGG1/ADA3 and SGF29), the DUB (deubiquitinating) module (UBP8, SGF11, SGF73 and SUS1), the core or TAF (TBP-associated factor) module (TAF5, TAF6, TAF9, TAF10 and TAF12), and the Tra1 or SPT (Suppressor of Ty) module (TRA1, HFI1/ADA1, SPT3, SPT7, SPT8 and SPT20/ADA5). The Tra1/SPT module binds activators, the core module recruits TBP (TATA-binding protein), the HAT module contains the histone H3 acetyltransferase GCN5, and the DUB module comprises the histone H2B deubiquitinase UBP8. Also identified in an altered form of SAGA, named SALSA (SAGA altered, Spt8 absent) or SLIK (SAGA-like) complex, which contains a C-terminal truncated form of SPT7 and is missing SPT8. However, it has been shown that the SAGA and SAGA-like SALSA/SLIK transcriptional coactivators are structurally and biochemically equivalent. Identified in the Ada.spt complex with NGG1/ADA3 and TRA1. Protease PEP4 directly cleaves the C-terminus of SPT7(SAGA) to form SPT7(SLIK) within the SAGA complex in the nucleus.

It is found in the nucleus. Functionally, component of the transcription coactivator SAGA complex. SAGA acts as a general cofactor required for essentially all RNA polymerase II transcription. At the promoters, SAGA is required for transcription pre-initiation complex (PIC) recruitment. It influences RNA polymerase II transcriptional activity through different activities such as TBP interaction (via core/TAF module) and promoter selectivity, interaction with transcription activators (via Tra1/SPT module), and chromatin modification through histone acetylation (via HAT module) and deubiquitination (via DUB module). SAGA preferentially acetylates histones H3 (to form H3K9ac, H3K14ac, H3K18ac and H3K23ac) and H2B and deubiquitinates histone H2B. SAGA interacts with DNA via upstream activating sequences (UASs). Also identified in a modified version of SAGA named SALSA or SLIK. The cleavage of SPT7 and the absence of the SPT8 subunit in SLIK neither drive any major conformational differences in its structure compared with SAGA, nor significantly affect HAT, DUB, or DNA-binding activities. The sequence is that of SAGA complex subunit SPT7 (SPT7) from Saccharomyces cerevisiae (strain ATCC 204508 / S288c) (Baker's yeast).